A 314-amino-acid chain; its full sequence is NF-kappa-B inhibitor alpha (314 aa).

A disordered region spans residues 1–40; the sequence is MFQPAGHGQDWAMEGPRDGLKKERLVDDRHDSGLDSMKDE. Residues 15–40 show a composition bias toward basic and acidic residues; sequence GPRDGLKKERLVDDRHDSGLDSMKDE. A Glycyl lysine isopeptide (Lys-Gly) (interchain with G-Cter in SUMO); alternate cross-link involves residue Lys-21. Residue Lys-21 forms a Glycyl lysine isopeptide (Lys-Gly) (interchain with G-Cter in ubiquitin); alternate linkage. A Glycyl lysine isopeptide (Lys-Gly) (interchain with G-Cter in ubiquitin) cross-link involves residue Lys-22. The Destruction motif signature appears at 30 to 36; it reads HDSGLDS. Ser-32 is modified (phosphoserine; by IKKB). Ser-36 carries the phosphoserine; by IKKA, IKKB, IKKE and TBK1 modification. Tyr-42 is subject to Phosphotyrosine. The Nuclear export signal motif lies at 45–54; that stretch reads MVKELREIRL. 5 ANK repeats span residues 73–103, 110–139, 143–172, 182–211, and 216–245; these read DGDS…DLAF, LQQT…DPEL, RGNT…PQHL, NGHT…DVNA, and NGRT…DVNR. The Nuclear import signal motif lies at 110–120; that stretch reads LQQTPLHLAVI. (3S)-3-hydroxyasparagine; by HIF1AN occurs at positions 210 and 244. Phosphoserine; by CK2 is present on residues Ser-283 and Ser-288. Thr-291 carries the post-translational modification Phosphothreonine; by CK2. Ser-293 carries the phosphoserine; by CK2 modification. Thr-296 is modified (phosphothreonine).

The protein belongs to the NF-kappa-B inhibitor family. In terms of assembly, interacts with RELA; the interaction requires the nuclear import signal. Part of a 70-90 kDa complex at least consisting of CHUK, IKBKB, NFKBIA, RELA, ELP1 and MAP3K14. Interacts with NKIRAS1 and NKIRAS2. Interacts with RWDD3; the interaction enhances sumoylation. Interacts with PRMT2. Interacts with PRKACA in platelets; this interaction is disrupted by thrombin and collagen. Interacts with MEFV. Interacts with DDRGK1; positively regulates NFKBIA phosphorylation and degradation. Interacts with HNRNPA2B1; the interaction may be mediated by the RRM2 domain of HNRNPA2B1, and HNRNPA2B1 may interact simultaneously with FAM76B and either NFKBIA or NFKBIE to form a complex. Phosphorylated at Ser-32 and Ser-36 by IKKA/CHUK and IKKB/IKBKB; disables inhibition of NF-kappa-B DNA-binding activity. Phosphorylation at positions 32 and 36 is prerequisite to recognition by the SCF(FBXW11) and SCF(BTRC) complexes, leading to polyubiquitination and subsequent degradation. In terms of processing, polyubiquitinated at Lys-21 and/or Lys-22 following phosphorylation at Ser-32 and Ser-36. Monoubiquitinated at Lys-21 and/or Lys-22 by UBE2D3. Ubiquitin chain elongation is then performed by CDC34 in cooperation with the SCF(FBXW11) E3 ligase complex, building ubiquitin chains from the UBE2D3-primed NFKBIA-linked ubiquitin. The resulting polyubiquitination leads to protein degradation. Also ubiquitinated by the SCF(BTRC) complex following stimulus-dependent phosphorylation at Ser-32 and Ser-36. Deubiquitinated by USP38, leading to NF-kappa-B inhibition. Post-translationally, sumoylated; sumoylation requires the presence of the nuclear import signal. Sumoylation blocks ubiquitination and proteasome-mediated degradation of the protein thereby increasing the protein stability. Hydroxylated by HIF1AN. In terms of tissue distribution, highly expressed in lymph node, thymus followed by liver, brain, muscle, kidney, gastrointestinal and reproductive tract.

It is found in the cytoplasm. The protein resides in the nucleus. Inhibits the activity of dimeric NF-kappa-B/REL complexes by trapping REL (RELA/p65 and NFKB1/p50) dimers in the cytoplasm by masking their nuclear localization signals. On cellular stimulation by immune and pro-inflammatory responses, becomes phosphorylated promoting ubiquitination and degradation, enabling the dimeric RELA to translocate to the nucleus and activate transcription. In Mus musculus (Mouse), this protein is NF-kappa-B inhibitor alpha (Nfkbia).